The sequence spans 182 residues: Troponin I, fast skeletal muscle (182 aa).

Gly2 is modified (N-acetylglycine). Residues 2-48 (GDEEKRNRAITARRQHLKSVMLQIAATELEKEEGRREAEKQNYLAEH) are involved in binding TNC. A Phosphothreonine; by PHK modification is found at Thr12. The interval 97-117 (NQKLFDLRGKFKRPPLRRVRM) is involved in binding TNC and actin. Phosphoserine; by PKA is present on Ser118.

It belongs to the troponin I family. Binds to actin and tropomyosin.

Troponin I is the inhibitory subunit of troponin, the thin filament regulatory complex which confers calcium-sensitivity to striated muscle actomyosin ATPase activity. The polypeptide is Troponin I, fast skeletal muscle (TNNI2) (Oryctolagus cuniculus (Rabbit)).